Consider the following 154-residue polypeptide: Stigma-specific STIG1-like protein 3 (154 aa).

A signal peptide spans methionine 1 to alanine 23.

Belongs to the STIG1 family.

This is Stigma-specific STIG1-like protein 3 from Arabidopsis thaliana (Mouse-ear cress).